The following is a 233-amino-acid chain: Phosphoglycolate phosphatase (233 aa).

The active-site Nucleophile is D9. Residues D9 and D11 each coordinate Mg(2+). K154 serves as a coordination point for substrate. Mg(2+)-binding residues include D177 and D181.

Belongs to the archaeal SPP-like hydrolase family. Requires Mg(2+) as cofactor.

The catalysed reaction is 2-phosphoglycolate + H2O = glycolate + phosphate. Its function is as follows. Catalyzes the dephosphorylation of 2-phosphoglycolate. In Pyrococcus abyssi (strain GE5 / Orsay), this protein is Phosphoglycolate phosphatase.